We begin with the raw amino-acid sequence, 993 residues long: Isoleucine--tRNA ligase, mitochondrial (993 aa).

The N-terminal 29 residues, 1–29, are a transit peptide targeting the mitochondrion; it reads SLWGTPRLPCSPGWQGATKRLLVRSVSGA. Lysine 55 is modified (N6-acetyllysine; alternate). Lysine 55 is subject to N6-succinyllysine; alternate. The short motif at 97–107 is the 'HIGH' region element; it reads PYANGDPHVGH. The residue at position 170 (lysine 170) is an N6-acetyllysine. The residue at position 175 (lysine 175) is an N6-succinyllysine. An N6-acetyllysine modification is found at lysine 214. Lysine 222 carries the post-translational modification N6-acetyllysine; alternate. Lysine 222 carries the N6-succinyllysine; alternate modification. N6-succinyllysine is present on residues lysine 460 and lysine 481. Positions 645 and 648 each coordinate ATP. The 'KMSKS' region motif lies at 645–649; sequence KMSKS. Position 706 is an N6-acetyllysine (lysine 706). Lysine 756 and lysine 762 each carry N6-acetyllysine; alternate. Residues lysine 756 and lysine 762 each carry the N6-succinyllysine; alternate modification.

It belongs to the class-I aminoacyl-tRNA synthetase family.

It localises to the mitochondrion matrix. The catalysed reaction is tRNA(Ile) + L-isoleucine + ATP = L-isoleucyl-tRNA(Ile) + AMP + diphosphate. Aminoacyl-tRNA synthetase that catalyzes the specific attachment of isoleucine to its cognate tRNA (tRNA(Ile)). This is Isoleucine--tRNA ligase, mitochondrial (IARS2) from Macaca fascicularis (Crab-eating macaque).